The chain runs to 811 residues: MTVKVRFDKEVRDYAKGEKVKDSILKLTETALAQALENFHRRMIVIEGDTLRKAELAGILAGASARVLSGILEELMKKRLRDESEDKIEVLYATDALGEETFGRKRYEAFRKHFDVLAGSNVEVKAVTFKHTRDILGRTYDLLILDMSYDYSPNDLGRIIETVRGGGLIFILAHPFEKWKNMWTGFHKSLVTPPYTIDDVKKRFNRRLIRKFTEHDGIYIITEGGKARKKPKRSKSQARIKARKGVPIPEETLFPKELYEMALTEGQVEVLKAFEELVEGGMLVLTADRGRGKSVSVGIGAIGLALALKKRTRIVVTAPELENVQALFRFAKRALERLGFKPYVVEERGLIKELYARKIGLRYYPPADGYKKSADLYILDEAAGIHVPILHKYLNKERVVYSSTIHGYEGAGRGFSVKFLKRAREKREFKELHMDEPIRYAENDPIERWLFDVLLLDAEPVELTEEDFELIEKKEVYLEEPDLDDWFENDREDLRNFVGIYILAHYRNRPSDVALLADAPHHEARVLRLKNGKIVTAIQIAKEGGIPKKVIEKMAKGYKPRGNIIPDMMVKHHYLKEFAKLKGYRIVRIATHPDAMDRGLGSKALELLEKEAREKGLDWIGSGFGASEELVRFWVRNGFAVVHLSPARNPVSGEFTAIVLKPISERAKKLIKKANDEFRIRLTEWLGDTHRELEPEIARWLFETPFGEAVDYPVHLTEIQKKRLDAFTGKVLTYDTVVDAVKPIVKLYFLDGWMKPYLDERQIRLLIYRVLQAHSWEETAKLIDRTETFTMIEVRDIIRGLWYYYKRLLKA.

Gln267 and Arg439 together coordinate ATP. Positions 473–662 constitute an N-acetyltransferase domain; sequence KKEVYLEEPD…GEFTAIVLKP (190 aa). Acetyl-CoA is bound by residues 589–591, Glu629, and Arg636; that span reads IAT.

The protein belongs to the TmcA family.

It localises to the cytoplasm. The enzyme catalyses cytidine(34) in elongator tRNA(Met) + acetyl-CoA + ATP + H2O = N(4)-acetylcytidine(34) in elongator tRNA(Met) + ADP + phosphate + CoA + H(+). It carries out the reaction a cytidine in RNA + acetyl-CoA + ATP + H2O = an N(4)-acetylcytidine in RNA + ADP + phosphate + CoA + H(+). It catalyses the reaction a cytidine in tRNA + acetyl-CoA + ATP + H2O = an N(4)-acetylcytidine in tRNA + ADP + phosphate + CoA + H(+). The catalysed reaction is a cytidine in mRNA + acetyl-CoA + ATP + H2O = an N(4)-acetylcytidine in mRNA + ADP + phosphate + CoA + H(+). Its function is as follows. Catalyzes the formation of N(4)-acetylcytidine (ac(4)C) at the wobble position of tRNA(Met), by using acetyl-CoA as an acetyl donor and ATP (or GTP). Functionally, catalyzes the formation of 267 N(4)-acetylcytidine (ac(4)C) sites in RNA, almost always on the middle C of a CCG motif. Modifications are found in rRNA, ncRNA, mRNA and tRNA. More acetylation is observed at 95 than at 75 or 85 degrees Celsius. In Thermococcus sp. (strain AM4), this protein is tRNA(Met) cytidine acetyltransferase TmcA.